A 348-amino-acid polypeptide reads, in one-letter code: Killer cell immunoglobulin-like receptor 2DL1 (348 aa).

The N-terminal stretch at 1–21 (MSLLVVSMACVGFFLLQGAWP) is a signal peptide. Residues 22–245 (HEGVHRKPSL…SKTGNPRHLH (224 aa)) lie on the Extracellular side of the membrane. 2 Ig-like C2-type domains span residues 42–107 (EETV…VTHS) and 142–205 (GENV…FHDS). Cysteine 49 and cysteine 100 are joined by a disulfide. N-linked (GlcNAc...) asparagine glycans are attached at residues asparagine 67, asparagine 84, asparagine 144, and asparagine 178. A disulfide bridge connects residues cysteine 149 and cysteine 198. The interval 220 to 239 (VTGNPSNSWPSPTEPSSKTG) is disordered. Residues 246 to 264 (ILIGTSVVIILFILLFFLL) traverse the membrane as a helical segment. Topologically, residues 265 to 348 (HRWCSNKKNA…ESRSKVVSCP (84 aa)) are cytoplasmic.

The protein belongs to the immunoglobulin superfamily. As to quaternary structure, interacts with ARRB2. Interacts with PTPN6; the interaction is enhanced by ARRB2. Interacts with PTPN11; the interaction is enhanced by ARRB2. Expressed by NK cells.

Its subcellular location is the cell membrane. Its function is as follows. Receptor on natural killer (NK) cells for some HLA-C alleles such as w4 and w6. Inhibits the activity of NK cells thus preventing cell lysis. This Homo sapiens (Human) protein is Killer cell immunoglobulin-like receptor 2DL1.